A 292-amino-acid chain; its full sequence is Protease HtpX homolog (292 aa).

2 consecutive transmembrane segments (helical) span residues 4-24 and 39-59; these read ILLF…VASL and GALL…SLLI. Histidine 144 is a binding site for Zn(2+). Glutamate 145 is a catalytic residue. Residue histidine 148 participates in Zn(2+) binding. Helical transmembrane passes span 159–179 and 199–219; these read LIQG…GYAV and VTTI…VAWF. Residue glutamate 224 participates in Zn(2+) binding.

This sequence belongs to the peptidase M48B family. Zn(2+) serves as cofactor.

Its subcellular location is the cell inner membrane. The chain is Protease HtpX homolog from Verminephrobacter eiseniae (strain EF01-2).